The sequence spans 458 residues: Phenylalanine-specific permease (458 aa).

Residues 1–27 are Cytoplasmic-facing; that stretch reads MKNASTVSEDTASNQEPTLHRGLHNRH. The helical transmembrane segment at 28–48 threads the bilayer; that stretch reads IQLIALGGAIGTGLFLGIGPA. The Periplasmic portion of the chain corresponds to 49–50; the sequence is IQ. Residues 51 to 71 traverse the membrane as a helical segment; it reads MAGPAVLLGYGVAGIIAFLIM. At 72-105 the chain is on the cytoplasmic side; the sequence is RQLGEMVVEEPVSGSFAHFAYKYWGPFAGFLSGW. A helical transmembrane segment spans residues 106–126; that stretch reads NYWVMFVLVGMAELTAAGIYM. Residues 127 to 132 lie on the Periplasmic side of the membrane; it reads QYWFPD. Residues 133–153 form a helical membrane-spanning segment; sequence VPTWIWAAAFFIIINAVNLVN. At 154–160 the chain is on the cytoplasmic side; it reads VRLYGET. A helical membrane pass occupies residues 161-181; the sequence is EFWFALIKVLAIIGMIGFGLW. The Periplasmic segment spans residues 182–196; sequence LLFSGHGGEKASIDN. Residues 197 to 217 traverse the membrane as a helical segment; that stretch reads LWRYGGFFATGWNGLILSLAV. Over 218–250 the chain is Cytoplasmic; the sequence is IMFSFGGLELIGITAAEARDPEKSIPKAVNQVV. A helical transmembrane segment spans residues 251–271; the sequence is YRILLFYIGSLVVLLALYPWV. The Periplasmic segment spans residues 272-288; that stretch reads EVKSNSSPFVMIFHNLD. A helical transmembrane segment spans residues 289 to 309; it reads SNVVASALNFVILVASLSVYN. The Cytoplasmic portion of the chain corresponds to 310–341; the sequence is SGVYSNSRMLFGLSVQGNAPKFLTRVSRRGVP. The chain crosses the membrane as a helical span at residues 342 to 362; it reads INSLMLSGAITSLVVLINYLL. The Periplasmic portion of the chain corresponds to 363-367; the sequence is PQKAF. Residues 368-388 traverse the membrane as a helical segment; that stretch reads GLLMALVVATLLLNWIMICLA. Residues 389-411 lie on the Cytoplasmic side of the membrane; the sequence is HLRFRAAMRRQGRETQFKALLYP. Residues 412 to 432 form a helical membrane-spanning segment; it reads FGNYLCIAFLGMILLLMCTMD. At 433–434 the chain is on the periplasmic side; it reads DM. A helical transmembrane segment spans residues 435 to 455; that stretch reads RLSAILLPVWIVFLFMAFKTL. At 456–458 the chain is on the cytoplasmic side; sequence RRK.

It belongs to the amino acid-polyamine-organocation (APC) superfamily. Amino acid transporter (AAT) (TC 2.A.3.1) family.

Its subcellular location is the cell inner membrane. The enzyme catalyses L-phenylalanine(in) + H(+)(in) = L-phenylalanine(out) + H(+)(out). Functionally, permease that is involved in the active transport across the cytoplasmic membrane of phenylalanine. Can also transport tyrosine, but not tryptophan. The protein is Phenylalanine-specific permease of Escherichia coli (strain K12).